The following is a 461-amino-acid chain: MKISVRNLEPTKAKLTITVDQDEFDPYLEDARKEIAEQITVPGFRKGHVPGKLVDQRVGFGAVAGEAVNKALPDMYAKALDEKDIRPMDQPQIEVVEMPQSAADDTKLKFTATVERRPEFELPNLEGLEIAVDKAEVSDDDVNNRLGTLRQRFATLVGVDRPAQKGDFANIDLTAQTDGETVDSQEGVSYEIGSGTMLDGLDEALEGLSAGEETTFESTLEGGDHEGEKAQVKVKVNSVKAEELPELDDDFAQEASEFDTLDELKAEIRKNIEADAEGRQATIARDAFIETLEEGLDIPLPKGVRNNMVEQQLKSMGVEAGKATSDQKKEAEEAVDKMLKDQMVLDALAEKLDVQVSQSDVFNFLGSIAQQYGMDPNMFIQALMRNGQIGSARREVARSRACSPGCVRWKFTVDGEPLDLSGFLGSEEAEAQAEEDESVAAAAAAAAVADNLTSDDGTDAE.

One can recognise a PPIase FKBP-type domain in the interval 166–245 (GDFANIDLTA…VNSVKAEELP (80 aa)).

This sequence belongs to the FKBP-type PPIase family. Tig subfamily.

It is found in the cytoplasm. The enzyme catalyses [protein]-peptidylproline (omega=180) = [protein]-peptidylproline (omega=0). In terms of biological role, involved in protein export. Acts as a chaperone by maintaining the newly synthesized protein in an open conformation. Functions as a peptidyl-prolyl cis-trans isomerase. The sequence is that of Trigger factor from Bifidobacterium animalis subsp. lactis (strain AD011).